A 651-amino-acid polypeptide reads, in one-letter code: Protein numb homolog (651 aa).

The PID domain occupies 33-193 (RTGKCSFPVK…ASRTTFTREG (161 aa)). Thr102 bears the Phosphothreonine; by AAK1 mark. Phosphoserine is present on Ser194. A disordered region spans residues 228–255 (SSVAPGNTAPSPSSPTSPTSDATTSLEM). Residues 235 to 252 (TAPSPSSPTSPTSDATTS) show a composition bias toward low complexity. Thr243 is modified (phosphothreonine). Ser244 carries the phosphoserine modification. Residues Ser276 and Ser295 each carry the phosphoserine; by CaMK1 modification. Disordered regions lie at residues 419–483 (QSSG…SPFQ) and 623–651 (LENK…EIEL). At Ser425 the chain carries Phosphoserine. Thr436 bears the Phosphothreonine mark. A compositionally biased stretch (basic and acidic residues) spans 436–449 (TPSEADRWLEEVSK). Residue Ser438 is modified to Phosphoserine. Positions 453–466 (AQQPQASAAPLQPV) are enriched in low complexity. Residues 630 to 644 (RTNPSPTNPFSSDLQ) show a composition bias toward polar residues. At Ser634 the chain carries Phosphoserine.

Interacts with SIAH1. Interacts with LNX. Interacts with CDH1. Interacts with TFAP2A and TFAP2B. Interacts with RALBP1 in a complex also containing EPN1 and TFAP2A during interphase and mitosis. Interacts with AAK1. May interact with DUOXA1. Post-translationally, phosphorylated on Ser-276 and Ser-295 by CaMK1. In terms of processing, isoform 1 and isoform 2 are ubiquitinated by LNX leading to their subsequent proteasomal degradation. Ubiquitinated; mediated by SIAH1 and leading to its subsequent proteasomal degradation.

It is found in the cell membrane. The protein localises to the endosome membrane. Functionally, regulates clathrin-mediated receptor endocytosis. Plays a role in the process of neurogenesis. Required throughout embryonic neurogenesis to maintain neural progenitor cells, also called radial glial cells (RGCs), by allowing their daughter cells to choose progenitor over neuronal cell fate. Not required for the proliferation of neural progenitor cells before the onset of neurogenesis. Also involved postnatally in the subventricular zone (SVZ) neurogenesis by regulating SVZ neuroblasts survival and ependymal wall integrity. May also mediate local repair of brain ventricular wall damage. The protein is Protein numb homolog of Homo sapiens (Human).